The chain runs to 89 residues: Small ribosomal subunit protein uS15 (89 aa).

The protein belongs to the universal ribosomal protein uS15 family. In terms of assembly, part of the 30S ribosomal subunit. Forms a bridge to the 50S subunit in the 70S ribosome, contacting the 23S rRNA.

Functionally, one of the primary rRNA binding proteins, it binds directly to 16S rRNA where it helps nucleate assembly of the platform of the 30S subunit by binding and bridging several RNA helices of the 16S rRNA. Forms an intersubunit bridge (bridge B4) with the 23S rRNA of the 50S subunit in the ribosome. The sequence is that of Small ribosomal subunit protein uS15 from Xanthobacter autotrophicus (strain ATCC BAA-1158 / Py2).